A 295-amino-acid polypeptide reads, in one-letter code: Taste receptor type 2 member 120 (295 aa).

Topologically, residues 1-5 (MDLTE) are extracellular. Residues 6-26 (WIVTIIMMIEFLLGNCANFFI) form a helical membrane-spanning segment. Topologically, residues 27–45 (MVVNAIDCMKRRKISSADR) are cytoplasmic. The helical transmembrane segment at 46 to 66 (IITALAISRIGLLWAMLMNWH) threads the bilayer. Residues 67 to 83 (SRVYTTDTYSFQVTAFS) are Extracellular-facing. A helical membrane pass occupies residues 84–104 (GIIWAITNHFTTWLGTILSMF). Topologically, residues 105-125 (YLFKIANFSNCLFLHLKRKLD) are cytoplasmic. A helical transmembrane segment spans residues 126–146 (SVLLVIFLVSSLLVFAYLGVV). Residues 147-177 (NIKKIAWLSVHEGNVTVKSKLMNIASIRDTL) lie on the Extracellular side of the membrane. Asn160 carries N-linked (GlcNAc...) asparagine glycosylation. Residues 178–198 (LFSLINIAPFGISLTCVLLLI) traverse the membrane as a helical segment. Over 199–230 (YSLGKHLKNMKFYGKGCQDQSTMVHIRALQTV) the chain is Cytoplasmic. The helical transmembrane segment at 231-251 (VSFLLLYATYSSCVIISGWSI) threads the bilayer. At 252-255 (QNVP) the chain is on the extracellular side. A helical transmembrane segment spans residues 256 to 276 (IFLFCVTIGAFYPAGHSCILI). Over 277 to 295 (WGNQKLKQFLLLFLRQMKC) the chain is Cytoplasmic.

This sequence belongs to the G-protein coupled receptor T2R family.

Its subcellular location is the membrane. Putative taste receptor which may play a role in the perception of bitterness. The sequence is that of Taste receptor type 2 member 120 from Rattus norvegicus (Rat).